Here is a 337-residue protein sequence, read N- to C-terminus: DNA-directed RNA polymerase subunit alpha (337 aa).

The interval 1-232 (MVREEVRVCT…IDLFIPFLHA (232 aa)) is alpha N-terminal domain (alpha-NTD). The segment at 266–337 (EISFQCIFID…FAIDLPKNKF (72 aa)) is alpha C-terminal domain (alpha-CTD).

It belongs to the RNA polymerase alpha chain family. As to quaternary structure, in plastids the minimal PEP RNA polymerase catalytic core is composed of four subunits: alpha, beta, beta', and beta''. When a (nuclear-encoded) sigma factor is associated with the core the holoenzyme is formed, which can initiate transcription.

The protein localises to the plastid. It localises to the chloroplast. The catalysed reaction is RNA(n) + a ribonucleoside 5'-triphosphate = RNA(n+1) + diphosphate. Its function is as follows. DNA-dependent RNA polymerase catalyzes the transcription of DNA into RNA using the four ribonucleoside triphosphates as substrates. The sequence is that of DNA-directed RNA polymerase subunit alpha from Buxus microphylla (Littleleaf boxwood).